A 1385-amino-acid polypeptide reads, in one-letter code: L-2-aminoadipate reductase large subunit (1385 aa).

The Carrier domain occupies 843-920 (SSFSPLEQEI…ELAKEISRVR (78 aa)). Position 880 is an O-(pantetheine 4'-phosphoryl)serine (Ser880).

The protein belongs to the ATP-dependent AMP-binding enzyme family. In terms of assembly, heterodimer of an alpha and a beta subunit. Pantetheine 4'-phosphate serves as cofactor.

It catalyses the reaction (S)-2-amino-6-oxohexanoate + NADP(+) + H2O = L-2-aminoadipate + NADPH + 2 H(+). It carries out the reaction (S)-2-amino-6-oxohexanoate + NAD(+) + H2O = L-2-aminoadipate + NADH + 2 H(+). The enzyme catalyses (S)-2-amino-6-oxohexanoate + AMP + diphosphate + NADP(+) = L-2-aminoadipate + ATP + NADPH + H(+). The protein operates within amino-acid biosynthesis; L-lysine biosynthesis via AAA pathway; L-lysine from L-alpha-aminoadipate (fungal route): step 1/3. Functionally, catalyzes the activation of alpha-aminoadipate by ATP-dependent adenylation and the reduction of activated alpha-aminoadipate by NADPH. The activated alpha-aminoadipate is bound to the phosphopantheinyl group of the enzyme itself before it is reduced to (S)-2-amino-6-oxohexanoate. This Eremothecium gossypii (strain ATCC 10895 / CBS 109.51 / FGSC 9923 / NRRL Y-1056) (Yeast) protein is L-2-aminoadipate reductase large subunit (LYS2).